The chain runs to 338 residues: 1-aminocyclopropane-1-carboxylate deaminase (338 aa).

K51 is modified (N6-(pyridoxal phosphate)lysine). The active-site Nucleophile is S78.

Belongs to the ACC deaminase/D-cysteine desulfhydrase family. Homotrimer. The cofactor is pyridoxal 5'-phosphate.

The catalysed reaction is 1-aminocyclopropane-1-carboxylate + H2O = 2-oxobutanoate + NH4(+). Functionally, catalyzes a cyclopropane ring-opening reaction, the irreversible conversion of 1-aminocyclopropane-1-carboxylate (ACC) to ammonia and alpha-ketobutyrate. Allows growth on ACC as a nitrogen source. The polypeptide is 1-aminocyclopropane-1-carboxylate deaminase (Paracidovorax citrulli (strain AAC00-1) (Acidovorax citrulli)).